Consider the following 319-residue polypeptide: Protease HtpX homolog (319 aa).

A run of 2 helical transmembrane segments spans residues 6 to 26 (TAML…VIGG) and 28 to 48 (GGMM…YWNS). A Zn(2+)-binding site is contributed by H130. Residue E131 is part of the active site. H134 lines the Zn(2+) pocket. A run of 2 helical transmembrane segments spans residues 145-165 (LTAT…FFGG) and 172-192 (PLGF…AMLV). E201 lines the Zn(2+) pocket. Positions 279–319 (REMSAGSTAPARPDNAVRRSRSVPKTGWGRGGSEPPKGPWS) are disordered.

This sequence belongs to the peptidase M48B family. The cofactor is Zn(2+).

Its subcellular location is the cell inner membrane. This chain is Protease HtpX homolog, found in Sinorhizobium fredii (strain NBRC 101917 / NGR234).